The primary structure comprises 341 residues: Abnormal cell lineage protein 44 (341 aa).

The N-terminal stretch at 1 to 21 is a signal peptide; that stretch reads MRALYFRTTTLSTFFILCSLA. Intrachain disulfides connect Cys84-Cys95, Cys134-Cys142, Cys144-Cys158, Cys206-Cys220, Cys208-Cys215, Cys265-Cys292, Cys275-Cys287, Cys291-Cys331, Cys307-Cys322, Cys309-Cys319, and Cys314-Cys315. Ser212 carries the O-palmitoleoyl serine; by mom-1 lipid modification. Asn279 carries an N-linked (GlcNAc...) asparagine glycan.

This sequence belongs to the Wnt family. In terms of processing, palmitoleoylation is required for efficient binding to frizzled receptors. Depalmitoleoylation leads to Wnt signaling pathway inhibition.

It is found in the secreted. The protein resides in the extracellular space. Its subcellular location is the extracellular matrix. Ligand for members of the frizzled family of seven transmembrane receptors. Affects male tail development, vulval precursor cell specification and egg laying. Involved in morphogenesis by influencing polarity of asymmetric cell divisions of the B, U, and F cells in the male, and the T cell in males and hermaphrodites. Controls spindle orientation in B-gamma cell division during male copulatory spicule development. Involved in specification of the P7.p lineage during vulval development. Has a role in providing polarity and default lin-17 localization in axon development and positioning of neuromuscular synapses in DA9 regions by negatively regulating synaptogenesis. The sequence is that of Abnormal cell lineage protein 44 from Caenorhabditis briggsae.